The primary structure comprises 119 residues: Large ribosomal subunit protein bL20 (119 aa).

Belongs to the bacterial ribosomal protein bL20 family.

Its function is as follows. Binds directly to 23S ribosomal RNA and is necessary for the in vitro assembly process of the 50S ribosomal subunit. It is not involved in the protein synthesizing functions of that subunit. In Streptococcus gordonii (strain Challis / ATCC 35105 / BCRC 15272 / CH1 / DL1 / V288), this protein is Large ribosomal subunit protein bL20.